Reading from the N-terminus, the 631-residue chain is Phosphomethylpyrimidine synthase (631 aa).

Residues Asn-239, Met-268, Tyr-297, His-333, 353–355 (SRG), 394–397 (DGLR), and Glu-433 contribute to the substrate site. His-437 contacts Zn(2+). Substrate is bound at residue Tyr-460. His-501 is a Zn(2+) binding site. Cys-581, Cys-584, and Cys-589 together coordinate [4Fe-4S] cluster.

The protein belongs to the ThiC family. In terms of assembly, homodimer. [4Fe-4S] cluster serves as cofactor.

It carries out the reaction 5-amino-1-(5-phospho-beta-D-ribosyl)imidazole + S-adenosyl-L-methionine = 4-amino-2-methyl-5-(phosphooxymethyl)pyrimidine + CO + 5'-deoxyadenosine + formate + L-methionine + 3 H(+). It functions in the pathway cofactor biosynthesis; thiamine diphosphate biosynthesis. In terms of biological role, catalyzes the synthesis of the hydroxymethylpyrimidine phosphate (HMP-P) moiety of thiamine from aminoimidazole ribotide (AIR) in a radical S-adenosyl-L-methionine (SAM)-dependent reaction. This is Phosphomethylpyrimidine synthase from Salmonella paratyphi B (strain ATCC BAA-1250 / SPB7).